The primary structure comprises 270 residues: Formamidopyrimidine-DNA glycosylase (270 aa).

The active-site Schiff-base intermediate with DNA is the P2. E3 acts as the Proton donor in catalysis. K58 functions as the Proton donor; for beta-elimination activity in the catalytic mechanism. Residues H91, R110, and R151 each contribute to the DNA site. An FPG-type zinc finger spans residues 236-270 (FVYGRGGEFCKVCGSTLREIRLGQRASVYCPRCQR). R260 serves as the catalytic Proton donor; for delta-elimination activity.

Belongs to the FPG family. Monomer. The cofactor is Zn(2+).

The enzyme catalyses Hydrolysis of DNA containing ring-opened 7-methylguanine residues, releasing 2,6-diamino-4-hydroxy-5-(N-methyl)formamidopyrimidine.. It catalyses the reaction 2'-deoxyribonucleotide-(2'-deoxyribose 5'-phosphate)-2'-deoxyribonucleotide-DNA = a 3'-end 2'-deoxyribonucleotide-(2,3-dehydro-2,3-deoxyribose 5'-phosphate)-DNA + a 5'-end 5'-phospho-2'-deoxyribonucleoside-DNA + H(+). Functionally, involved in base excision repair of DNA damaged by oxidation or by mutagenic agents. Acts as a DNA glycosylase that recognizes and removes damaged bases. Has a preference for oxidized purines, such as 7,8-dihydro-8-oxoguanine (8-oxoG). Has AP (apurinic/apyrimidinic) lyase activity and introduces nicks in the DNA strand. Cleaves the DNA backbone by beta-delta elimination to generate a single-strand break at the site of the removed base with both 3'- and 5'-phosphates. This Pseudomonas paraeruginosa (strain DSM 24068 / PA7) (Pseudomonas aeruginosa (strain PA7)) protein is Formamidopyrimidine-DNA glycosylase.